The sequence spans 45 residues: Putative UPF0377 protein YJL222W-B (45 aa).

It belongs to the UPF0377 family.

This chain is Putative UPF0377 protein YJL222W-B, found in Saccharomyces cerevisiae (strain ATCC 204508 / S288c) (Baker's yeast).